The chain runs to 362 residues: MGTEATEQVSWGHYSGDEEDAYSAEPLPELCYKADVQAFSRAFQPSVSLTVAALGLAGNGLVLATHLAARRAARSPTSAHLLQLALADLLLALTLPFAAAGALQGWSLGSATCRTISGLYSASFHAGFLFLACISADRYVAIARALPAGPRPSTPGRAHLVSVIVWLLSLLLALPALLFSQDGQREGQRRCRLIFPEGLTQTVKGASAVAQVALGFALPLGVMVACYALLGRTLLAARGPERRRALRVVVALVAAFVVLQLPYSLALLLDTADLLAARERSCPASKRKDVALLVTSGLALARCGLNPVLYAFLGLRFRQDLRRLLRGGSCPSGPQPRRGCPRRPRLSSCSAPTETHSLSWDN.

The Extracellular segment spans residues 1–52 (MGTEATEQVSWGHYSGDEEDAYSAEPLPELCYKADVQAFSRAFQPSVSLTVA). A helical transmembrane segment spans residues 53-68 (ALGLAGNGLVLATHLA). The Cytoplasmic portion of the chain corresponds to 69–78 (ARRAARSPTS). The helical transmembrane segment at 79-99 (AHLLQLALADLLLALTLPFAA) threads the bilayer. At 100–114 (AGALQGWSLGSATCR) the chain is on the extracellular side. A disulfide bridge connects residues Cys113 and Cys191. Residues 115–136 (TISGLYSASFHAGFLFLACISA) traverse the membrane as a helical segment. At 137-159 (DRYVAIARALPAGPRPSTPGRAH) the chain is on the cytoplasmic side. The helical transmembrane segment at 160–179 (LVSVIVWLLSLLLALPALLF) threads the bilayer. Residues 180-203 (SQDGQREGQRRCRLIFPEGLTQTV) are Extracellular-facing. The chain crosses the membrane as a helical span at residues 204-225 (KGASAVAQVALGFALPLGVMVA). Residues 226–247 (CYALLGRTLLAARGPERRRALR) lie on the Cytoplasmic side of the membrane. The chain crosses the membrane as a helical span at residues 248-269 (VVVALVAAFVVLQLPYSLALLL). Residues 270–290 (DTADLLAARERSCPASKRKDV) lie on the Extracellular side of the membrane. Residues 291 to 313 (ALLVTSGLALARCGLNPVLYAFL) traverse the membrane as a helical segment. Over 314–362 (GLRFRQDLRRLLRGGSCPSGPQPRRGCPRRPRLSSCSAPTETHSLSWDN) the chain is Cytoplasmic. Over residues 328–338 (GSCPSGPQPRR) the composition is skewed to low complexity. A disordered region spans residues 328–362 (GSCPSGPQPRRGCPRRPRLSSCSAPTETHSLSWDN). Positions 351–362 (APTETHSLSWDN) are enriched in polar residues.

It belongs to the G-protein coupled receptor 1 family. Expressed at high levels in adult testis, small intestine, fetal lung, fetal kidney. Weaker expression was observed in many other adult tissues including spleen, thymus, lymph node, Peyer patches, colon, heart, ovary, peripheral blood lymphocytes, thyroid and spinal cord. Also expressed by melanocytes, dermal fibroblasts, dermal microvascular endothelial cells. Also detected in T-cells and in skin-derived Langerhans cells.

Its subcellular location is the cell membrane. Receptor for chemokines SCYA27 and SCYA28. Subsequently transduces a signal by increasing the intracellular calcium ions level and stimulates chemotaxis in a pre-B cell line. In Homo sapiens (Human), this protein is C-C chemokine receptor type 10 (CCR10).